The sequence spans 473 residues: ATP synthase subunit beta (473 aa).

153–160 lines the ATP pocket; sequence GGAGVGKT.

The protein belongs to the ATPase alpha/beta chains family. F-type ATPases have 2 components, CF(1) - the catalytic core - and CF(0) - the membrane proton channel. CF(1) has five subunits: alpha(3), beta(3), gamma(1), delta(1), epsilon(1). CF(0) has three main subunits: a(1), b(2) and c(9-12). The alpha and beta chains form an alternating ring which encloses part of the gamma chain. CF(1) is attached to CF(0) by a central stalk formed by the gamma and epsilon chains, while a peripheral stalk is formed by the delta and b chains.

It localises to the cell inner membrane. It carries out the reaction ATP + H2O + 4 H(+)(in) = ADP + phosphate + 5 H(+)(out). In terms of biological role, produces ATP from ADP in the presence of a proton gradient across the membrane. The catalytic sites are hosted primarily by the beta subunits. In Rickettsia bellii (strain OSU 85-389), this protein is ATP synthase subunit beta.